The primary structure comprises 240 residues: Oxygen-insensitive NADPH nitroreductase (240 aa).

FMN-binding positions include 11–15 (HRSIR), Ser-39, Gln-67, 128–131 (YIGG), and 167–169 (KPR).

The protein belongs to the flavin oxidoreductase frp family. As to quaternary structure, homodimer. The cofactor is FMN.

Its function is as follows. Catalyzes the reduction of nitroaromatic compounds using NADPH. Has a broad electron acceptor specificity. Reduces nitrofurazone by a ping-pong bi-bi mechanism possibly to generate a two-electron transfer product. In Salmonella typhimurium (strain LT2 / SGSC1412 / ATCC 700720), this protein is Oxygen-insensitive NADPH nitroreductase (nfsA).